We begin with the raw amino-acid sequence, 588 residues long: Adenine deaminase (588 aa).

The protein belongs to the metallo-dependent hydrolases superfamily. Adenine deaminase family. In terms of assembly, homodimer. Requires Mn(2+) as cofactor.

The enzyme catalyses adenine + H2O + H(+) = hypoxanthine + NH4(+). The sequence is that of Adenine deaminase from Escherichia coli O81 (strain ED1a).